Consider the following 309-residue polypeptide: GDP-6-deoxy-D-mannose reductase (309 aa).

NADP(+) is bound by residues 11 to 12 (FV), Arg32, 47 to 48 (DI), and 71 to 73 (AKS). 114–115 (SS) provides a ligand contact to substrate. Tyr140 is a binding site for NADP(+). Substrate-binding positions include Asn169, Asp183, Arg209, and 269-272 (RPSE).

It belongs to the NAD(P)-dependent epimerase/dehydratase family. GDP-6-deoxy-D-mannose reductase subfamily.

It carries out the reaction GDP-alpha-D-rhamnose + NAD(+) = GDP-4-dehydro-alpha-D-rhamnose + NADH + H(+). The enzyme catalyses GDP-alpha-D-rhamnose + NADP(+) = GDP-4-dehydro-alpha-D-rhamnose + NADPH + H(+). In terms of biological role, reductase that catalyzes the conversion of GDP-6-deoxy-D-mannose to GDP-4-dehydro-6-deoxy-D-mannose (GDP-D-rhamnose). This Aneurinibacillus thermoaerophilus protein is GDP-6-deoxy-D-mannose reductase (rmd).